Consider the following 316-residue polypeptide: Transcription initiation factor IIB (316 aa).

Residues 7–38 (FRLRCPVCGSTDIVFNEETGEYVCARCGTIVL) form a TFIIB-type zinc finger. C11, C14, C30, and C33 together coordinate Zn(2+). The interval 51 to 73 (FTPEERERRGRTGAPLSPTLHDH) is disordered. 2 tandem repeats follow at residues 124 to 207 (NELD…TKEL) and 218 to 299 (DHIP…EIMK).

It belongs to the TFIIB family.

Its function is as follows. Stabilizes TBP binding to an archaeal box-A promoter. Also responsible for recruiting RNA polymerase II to the pre-initiation complex (DNA-TBP-TFIIB). The sequence is that of Transcription initiation factor IIB from Ignicoccus hospitalis (strain KIN4/I / DSM 18386 / JCM 14125).